The chain runs to 152 residues: Protein-export protein SecB (152 aa).

It belongs to the SecB family. In terms of assembly, homotetramer, a dimer of dimers. One homotetramer interacts with 1 SecA dimer.

The protein resides in the cytoplasm. One of the proteins required for the normal export of preproteins out of the cell cytoplasm. It is a molecular chaperone that binds to a subset of precursor proteins, maintaining them in a translocation-competent state. It also specifically binds to its receptor SecA. In Rickettsia rickettsii (strain Iowa), this protein is Protein-export protein SecB.